A 565-amino-acid polypeptide reads, in one-letter code: Cytokinin dehydrogenase 2 (565 aa).

The N-terminal stretch at 1–20 is a signal peptide; that stretch reads MKQEQVRMAVLLMLNCFVKA. The N-linked (GlcNAc...) asparagine glycan is linked to Asn64. The region spanning 74–255 is the FAD-binding PCMH-type domain; it reads RLAAAAAVLY…TRARIPLAPA (182 aa). 3 residues coordinate FAD: Ala108, Gly110, and Gly112. His113 is modified (pros-8alpha-FAD histidine). Residues Ser114, Gln118, Asp179, Thr184, Ser190, Ile194, and Ile245 each coordinate FAD. The N-linked (GlcNAc...) asparagine glycan is linked to Asn464. Positions 517, 554, and 557 each coordinate FAD.

The protein belongs to the oxygen-dependent FAD-linked oxidoreductase family. In terms of assembly, monomer. FAD is required as a cofactor. Post-translationally, glycosylated. As to expression, mostly expressed in leaves, culms, inflorescence meristems, and flowers, especially in vascular tissues.

The protein localises to the secreted. The protein resides in the extracellular space. It carries out the reaction N(6)-dimethylallyladenine + A + H2O = 3-methyl-2-butenal + adenine + AH2. Functionally, catalyzes the oxidation of cytokinins, a family of N(6)-substituted adenine derivatives that are plant hormones, where the substituent is an isopentenyl group. Is a major QTL involved in grain yield. Modulates the number of reproductive organs by regulating the cytokinin accumulation in inflorescence meristems. Acts as negative regulator of panicle branching. This is Cytokinin dehydrogenase 2 from Oryza sativa subsp. japonica (Rice).